The chain runs to 246 residues: 2-C-methyl-D-erythritol 4-phosphate cytidylyltransferase (246 aa).

It belongs to the IspD/TarI cytidylyltransferase family. IspD subfamily.

It carries out the reaction 2-C-methyl-D-erythritol 4-phosphate + CTP + H(+) = 4-CDP-2-C-methyl-D-erythritol + diphosphate. Its pathway is isoprenoid biosynthesis; isopentenyl diphosphate biosynthesis via DXP pathway; isopentenyl diphosphate from 1-deoxy-D-xylulose 5-phosphate: step 2/6. Functionally, catalyzes the formation of 4-diphosphocytidyl-2-C-methyl-D-erythritol from CTP and 2-C-methyl-D-erythritol 4-phosphate (MEP). This is 2-C-methyl-D-erythritol 4-phosphate cytidylyltransferase from Chlorobaculum tepidum (strain ATCC 49652 / DSM 12025 / NBRC 103806 / TLS) (Chlorobium tepidum).